Here is a 217-residue protein sequence, read N- to C-terminus: Adapter protein MecA (217 aa).

This sequence belongs to the MecA family. Homodimer.

Its function is as follows. Enables the recognition and targeting of unfolded and aggregated proteins to the ClpC protease or to other proteins involved in proteolysis. This is Adapter protein MecA from Listeria innocua serovar 6a (strain ATCC BAA-680 / CLIP 11262).